Reading from the N-terminus, the 548-residue chain is Chaperonin GroEL 1 (548 aa).

Residues 30–33 (TLGP), Lys51, 87–91 (DGTTT), Gly415, 479–481 (NAA), and Asp495 contribute to the ATP site.

Belongs to the chaperonin (HSP60) family. In terms of assembly, forms a cylinder of 14 subunits composed of two heptameric rings stacked back-to-back. Interacts with the co-chaperonin GroES.

It is found in the cytoplasm. It carries out the reaction ATP + H2O + a folded polypeptide = ADP + phosphate + an unfolded polypeptide.. Its function is as follows. Together with its co-chaperonin GroES, plays an essential role in assisting protein folding. The GroEL-GroES system forms a nano-cage that allows encapsulation of the non-native substrate proteins and provides a physical environment optimized to promote and accelerate protein folding. The chain is Chaperonin GroEL 1 from Escherichia coli O1:K1 / APEC.